Here is a 114-residue protein sequence, read N- to C-terminus: uncharacterized protein (114 aa).

The ABM domain occupies 13-99 (YYAVIFSSVK…VWYESYAVRV (87 aa)).

This is an uncharacterized protein from Bacillus subtilis (strain 168).